Reading from the N-terminus, the 625-residue chain is Interleukin-1 receptor-associated kinase-like 2 (625 aa).

Residues 13 to 94 enclose the Death domain; that stretch reads LDDPCRNMDA…RAAQIILNWK (82 aa). The disordered stretch occupies residues 111 to 181; it reads KPEKPLAASV…SSDSKDFSTS (71 aa). Serine 144 bears the Phosphoserine mark. Positions 169–181 are enriched in polar residues; that stretch reads LPTSSDSKDFSTS. The Protein kinase domain occupies 210–503; that stretch reads FNQNHKISQG…GSVAAVEEWL (294 aa). ATP contacts are provided by residues 216–224, lysine 237, and 337–340; these read ISQGTFADV and KSSN. The interval 513–539 is disordered; that stretch reads SGLSEGTGSSSNTPEETDDVDNSSLDA. Residues 516 to 526 are compositionally biased toward polar residues; sequence SEGTGSSSNTP.

Belongs to the protein kinase superfamily. TKL Ser/Thr protein kinase family. Pelle subfamily. Interacts with MYD88. IL-1 stimulation leads to the formation of a signaling complex which dissociates from the IL-1 receptor following the binding of PELI1.

In terms of biological role, binds to the IL-1 type I receptor following IL-1 engagement, triggering intracellular signaling cascades leading to transcriptional up-regulation and mRNA stabilization. This is Interleukin-1 receptor-associated kinase-like 2 (IRAK2) from Pongo abelii (Sumatran orangutan).